Consider the following 291-residue polypeptide: uncharacterized protein (291 aa).

This is an uncharacterized protein from Lymantria dispar multicapsid nuclear polyhedrosis virus (LdMNPV).